The primary structure comprises 124 residues: Small ribosomal subunit protein uS12 (124 aa).

Positions 1–22 are disordered; the sequence is MATVNQLVRKPRKRKVAKSDVP. At aspartate 89 the chain carries 3-methylthioaspartic acid. A disordered region spans residues 99 to 124; sequence RGSLDTSGVQNRKQGRSKYGTKRPKK. Over residues 111 to 124 the composition is skewed to basic residues; the sequence is KQGRSKYGTKRPKK.

Belongs to the universal ribosomal protein uS12 family. In terms of assembly, part of the 30S ribosomal subunit. Contacts proteins S8 and S17. May interact with IF1 in the 30S initiation complex.

With S4 and S5 plays an important role in translational accuracy. Functionally, interacts with and stabilizes bases of the 16S rRNA that are involved in tRNA selection in the A site and with the mRNA backbone. Located at the interface of the 30S and 50S subunits, it traverses the body of the 30S subunit contacting proteins on the other side and probably holding the rRNA structure together. The combined cluster of proteins S8, S12 and S17 appears to hold together the shoulder and platform of the 30S subunit. The chain is Small ribosomal subunit protein uS12 from Marinomonas sp. (strain MWYL1).